Consider the following 654-residue polypeptide: Biotin-dependent 3-methylcrotonyl-coenzyme A carboxylase alpha1 subunit (654 aa).

Positions 1 to 448 constitute a Biotin carboxylation domain; it reads MFDTVLVANR…DTAVLDERSA (448 aa). In terms of domain architecture, ATP-grasp spans 120 to 319; it reads KNAVAAFDVP…LVEWQLRVGA (200 aa). Residue 148-209 participates in ATP binding; it reads AAEVGYPVLI…ERFVLRPRHI (62 aa). Positions 275, 290, and 292 each coordinate Mg(2+). Positions 275, 290, and 292 each coordinate Mn(2+). Residues 578–653 form the Biotinyl-binding domain; that stretch reads HRAVGARPAE…KVEQVLARIK (76 aa). Lys-620 carries the post-translational modification N6-biotinyllysine.

As to quaternary structure, the biotin-dependent acyl-CoA carboxylase complex is composed of AccA1, which contains the biotin carboxylase (BC) and biotin carboxyl carrier protein (BCCP) domains, and AccD1, which contains the carboxyl transferase (CT) domain. The AccA1/AccD1 complex forms a dodecamer. It depends on Mg(2+) as a cofactor. The cofactor is Mn(2+). Biotin is required as a cofactor.

It catalyses the reaction N(6)-biotinyl-L-lysyl-[protein] + hydrogencarbonate + ATP = N(6)-carboxybiotinyl-L-lysyl-[protein] + ADP + phosphate + H(+). It participates in amino-acid degradation; L-leucine degradation. In terms of biological role, component of a biotin-dependent acyl-CoA carboxylase complex. This subunit catalyzes the ATP-dependent carboxylation of the biotin carried by the biotin carboxyl carrier (BCC) domain, resulting in the formation of carboxyl biotin. When associated with the beta1 subunit AccD1, is involved in branched amino-acid catabolism with methylcrotonyl coenzyme A as the substrate. In Mycobacterium bovis (strain ATCC BAA-935 / AF2122/97), this protein is Biotin-dependent 3-methylcrotonyl-coenzyme A carboxylase alpha1 subunit (accA1).